The primary structure comprises 596 residues: Histone deacetylase 9 (596 aa).

2 stretches are compositionally biased toward basic and acidic residues: residues 132-153 and 160-172; these read REKE…HRQE and RSKD…AVAS. Disordered stretches follow at residues 132–172, 214–258, 293–313, and 522–596; these read REKE…AVAS, HTSL…VRSR, SSVS…GPVA, and QPEG…QQVT. The segment at 172–222 is interaction with mef2; that stretch reads STEVKQKLQEFILSKSATKEPLTNGTSHSMGRHPKLWYTAAHHTSLDQSSP. The segment covering 221–237 has biased composition (pro residues); that stretch reads SPPPSGTSPTYKCPPPG. The span at 293–312 shows a compositional bias: low complexity; sequence SSVSSSSPVSGPSSPNNGPV. The span at 522–536 shows a compositional bias: basic and acidic residues; the sequence is QPEGHLEEAEEDLHG. Polar residues predominate over residues 541-558; that stretch reads QEKSSSIDNTRSYSSTDL. Basic and acidic residues predominate over residues 567–585; it reads KVKEEPPDSENEIKTHLQS. The span at 586–596 shows a compositional bias: polar residues; it reads EQKSVFAQQVT.

This sequence belongs to the histone deacetylase family. HD type 2 subfamily. In terms of assembly, homodimer. Interacts with mef2. In terms of tissue distribution, broadly expressed.

The protein localises to the nucleus. It catalyses the reaction N(6)-acetyl-L-lysyl-[histone] + H2O = L-lysyl-[histone] + acetate. In terms of biological role, devoided of intrinsic deacetylase activity, promotes the deacetylation of lysine residues on the N-terminal part of the core histones (H2A, H2B, H3 and H4) by recruiting other histone deacetylases. Histone deacetylation gives a tag for epigenetic repression and plays an important role in transcriptional regulation, cell cycle progression and developmental events. Represses MEF2-dependent transcription. This chain is Histone deacetylase 9 (hdac9), found in Xenopus laevis (African clawed frog).